The following is a 133-amino-acid chain: Ribosome-binding factor A (133 aa).

The protein belongs to the RbfA family. As to quaternary structure, monomer. Binds 30S ribosomal subunits, but not 50S ribosomal subunits or 70S ribosomes.

The protein resides in the cytoplasm. Its function is as follows. One of several proteins that assist in the late maturation steps of the functional core of the 30S ribosomal subunit. Associates with free 30S ribosomal subunits (but not with 30S subunits that are part of 70S ribosomes or polysomes). Required for efficient processing of 16S rRNA. May interact with the 5'-terminal helix region of 16S rRNA. This Cronobacter sakazakii (strain ATCC BAA-894) (Enterobacter sakazakii) protein is Ribosome-binding factor A.